The primary structure comprises 343 residues: N-acetyl-gamma-glutamyl-phosphate reductase (343 aa).

Cys-148 is a catalytic residue.

Belongs to the NAGSA dehydrogenase family. Type 1 subfamily.

The protein localises to the cytoplasm. It carries out the reaction N-acetyl-L-glutamate 5-semialdehyde + phosphate + NADP(+) = N-acetyl-L-glutamyl 5-phosphate + NADPH + H(+). Its pathway is amino-acid biosynthesis; L-arginine biosynthesis; N(2)-acetyl-L-ornithine from L-glutamate: step 3/4. Its function is as follows. Catalyzes the NADPH-dependent reduction of N-acetyl-5-glutamyl phosphate to yield N-acetyl-L-glutamate 5-semialdehyde. The protein is N-acetyl-gamma-glutamyl-phosphate reductase of Caldicellulosiruptor bescii (strain ATCC BAA-1888 / DSM 6725 / KCTC 15123 / Z-1320) (Anaerocellum thermophilum).